The sequence spans 265 residues: HUWE1-associated protein modifying stress responses (265 aa).

Disordered stretches follow at residues 1 to 22 (MEDK…HWFS), 145 to 170 (RNSR…GSSV), 195 to 218 (VRSS…RRNG), and 240 to 265 (GTRK…NRMI). Composition is skewed to polar residues over residues 156 to 170 (VSPN…GSSV) and 195 to 212 (VRSS…SSNT).

It belongs to the TAPR1 family. Oligomer.

The protein resides in the nucleus. It localises to the cytoplasm. Its function is as follows. Acts as a central player within a network of stress response pathways promoting cellular adaptability. Functions as a negative regulator of TP53/P53 in the cellular response to telomere erosion and probably also DNA damage. In Xenopus laevis (African clawed frog), this protein is HUWE1-associated protein modifying stress responses.